The primary structure comprises 433 residues: Homogentisate 1,2-dioxygenase (433 aa).

His288 (proton acceptor) is an active-site residue. Fe cation contacts are provided by His331 and Glu337. Homogentisate is bound by residues Tyr346 and His367. Position 367 (His367) interacts with Fe cation.

This sequence belongs to the homogentisate dioxygenase family. As to quaternary structure, hexamer; dimer of trimers. Requires Fe cation as cofactor.

The enzyme catalyses homogentisate + O2 = 4-maleylacetoacetate + H(+). It functions in the pathway amino-acid degradation; L-phenylalanine degradation; acetoacetate and fumarate from L-phenylalanine: step 4/6. In terms of biological role, involved in the catabolism of homogentisate (2,5-dihydroxyphenylacetate or 2,5-OH-PhAc), a central intermediate in the degradation of phenylalanine and tyrosine. Catalyzes the oxidative ring cleavage of the aromatic ring of homogentisate to yield maleylacetoacetate. The polypeptide is Homogentisate 1,2-dioxygenase (Pseudomonas putida (strain GB-1)).